Here is a 241-residue protein sequence, read N- to C-terminus: MIDLTGKTSLITGASSGIGSAIARLLHKLGSKVIISGSNEEKLKSLGNALKDNYTIEVCNLANKEECSNLISKTSNLDILVCNAGITSDTLAIRMKDQDFDKVIDINLKANFILNREAIKKMIQKRYGRIINISSIVGIAGNPGQANYCASKAGLIGMTKSLSYEVATRGITVNAVAPGFIKSDMTDKLNEKQREAIVQKIPLGTYGIPEDVAYAVAFLASNNASYITGQTLHVNGGMLMV.

NADP(+) is bound by residues 13–16 (GASS), Ser38, 57–58 (EV), and Asn83. Ser135 contributes to the substrate binding site. The Proton acceptor role is filled by Tyr148. Residues 148-152 (YCASK) and Ile181 each bind NADP(+).

This sequence belongs to the short-chain dehydrogenases/reductases (SDR) family. As to quaternary structure, homotetramer.

It carries out the reaction a (3R)-hydroxyacyl-[ACP] + NADP(+) = a 3-oxoacyl-[ACP] + NADPH + H(+). It participates in lipid metabolism; fatty acid biosynthesis. Catalyzes the NADPH-dependent reduction of beta-ketoacyl-ACP substrates to beta-hydroxyacyl-ACP products, the first reductive step in the elongation cycle of fatty acid biosynthesis. In Rickettsia prowazekii (strain Madrid E), this protein is 3-oxoacyl-[acyl-carrier-protein] reductase FabG (fabG).